A 153-amino-acid polypeptide reads, in one-letter code: Protein SprT-like (153 aa).

The region spanning 6–148 is the SprT-like domain; it reads LQQLTEQLSL…CGKCGGKIKE (143 aa). Zn(2+) is bound at residue His-67. Residue Glu-68 is part of the active site. Zn(2+) is bound at residue His-71.

It belongs to the SprT family. Requires Zn(2+) as cofactor.

It localises to the cytoplasm. This chain is Protein SprT-like, found in Bacillus licheniformis (strain ATCC 14580 / DSM 13 / JCM 2505 / CCUG 7422 / NBRC 12200 / NCIMB 9375 / NCTC 10341 / NRRL NRS-1264 / Gibson 46).